A 106-amino-acid polypeptide reads, in one-letter code: Cytochrome c (106 aa).

Heme c-binding residues include C17, C20, and H21. At K75 the chain carries N6,N6,N6-trimethyllysine. M83 lines the heme c pocket.

Belongs to the cytochrome c family. In terms of processing, binds 1 heme c group covalently per subunit.

The protein localises to the mitochondrion intermembrane space. Electron carrier protein. The oxidized form of the cytochrome c heme group can accept an electron from the heme group of the cytochrome c1 subunit of cytochrome reductase. Cytochrome c then transfers this electron to the cytochrome oxidase complex, the final protein carrier in the mitochondrial electron-transport chain. In Gibberella zeae (strain ATCC MYA-4620 / CBS 123657 / FGSC 9075 / NRRL 31084 / PH-1) (Wheat head blight fungus), this protein is Cytochrome c (CYC1).